A 229-amino-acid chain; its full sequence is Heptaprenylglyceryl phosphate synthase (229 aa).

Residue lysine 12 coordinates sn-glycerol 1-phosphate. Positions 14 and 40 each coordinate Mg(2+). Sn-glycerol 1-phosphate-binding positions include 159–164 (YLEYSG), glycine 189, and 209–210 (GN).

This sequence belongs to the GGGP/HepGP synthase family. Group I subfamily. As to quaternary structure, homodimer. It depends on Mg(2+) as a cofactor.

The catalysed reaction is sn-glycerol 1-phosphate + all-trans-heptaprenyl diphosphate = 3-heptaprenyl-sn-glycero-1-phosphate + diphosphate. Its pathway is membrane lipid metabolism; glycerophospholipid metabolism. Its function is as follows. Prenyltransferase that catalyzes in vivo the transfer of the heptaprenyl moiety of heptaprenyl pyrophosphate (HepPP; 35 carbon atoms) to the C3 hydroxyl of sn-glycerol-1-phosphate (G1P), producing heptaprenylglyceryl phosphate (HepGP). This reaction is an ether-bond-formation step in the biosynthesis of archaea-type G1P-based membrane lipids found in Bacillales. This Bacillus velezensis (strain DSM 23117 / BGSC 10A6 / LMG 26770 / FZB42) (Bacillus amyloliquefaciens subsp. plantarum) protein is Heptaprenylglyceryl phosphate synthase.